The sequence spans 242 residues: Ferritin, mitochondrial (242 aa).

A mitochondrion-targeting transit peptide spans 1–49 (MLPCSLFLPKHISTSLVFLRSARHGFALLPRWVPRLSSDYPPAAPIRLL). The region spanning 70 to 219 (QNFHPDSEAA…DHVNNLVKMG (150 aa)) is the Ferritin-like diiron domain. Glu-87, Glu-122, His-125, Glu-167, and Gln-201 together coordinate Fe cation.

This sequence belongs to the ferritin family. As to quaternary structure, homooligomer of 24 subunits. The functional molecule is roughly spherical and contains a central cavity into which the polymeric mineral iron core is deposited.

The protein resides in the mitochondrion. It carries out the reaction 4 Fe(2+) + O2 + 4 H(+) = 4 Fe(3+) + 2 H2O. Functionally, catalyzes the oxidation of ferrous iron(II) to ferric iron(III) and stores iron in a soluble, non-toxic, readily available form. Important for iron homeostasis. Iron is taken up in the ferrous form and deposited as ferric hydroxides after oxidation. This chain is Ferritin, mitochondrial, found in Bos taurus (Bovine).